The primary structure comprises 206 residues: Large ribosomal subunit protein bL25 (206 aa).

Residues 1–91 form a bL25 domain region; it reads MEYRLKAYYR…RPEHVDFFVL (91 aa). The tract at residues 92–206 is CTC domain; it reads SDEPVEMYVP…IKKGKEEEEE (115 aa). Positions 184 to 206 are disordered; the sequence is AEEAAAEVAEPEVIKKGKEEEEE. A compositionally biased stretch (basic and acidic residues) spans 195–206; that stretch reads EVIKKGKEEEEE.

It belongs to the bacterial ribosomal protein bL25 family. CTC subfamily. As to quaternary structure, part of the 50S ribosomal subunit. Contacts the 5S rRNA.

Functionally, this is one of 3 proteins that mediate the attachment of the 5S rRNA onto the large ribosomal subunit. The chain is Large ribosomal subunit protein bL25 (rplY) from Thermus thermophilus.